We begin with the raw amino-acid sequence, 403 residues long: Blue light- and temperature-regulated antirepressor BluF (403 aa).

A BLUF domain is found at 2–93 (LTTLIYRSHI…ARRFGKAGME (92 aa)). The interval 98-144 (RLHERDDVLQAVFDKGTSKFQLTYDDRALQFFRTFVLATEQSTYFEI) is joining helix. The EAL domain maps to 155–403 (DGSDKELDSC…IPSIAWPEKK (249 aa)).

In terms of assembly, monomer, it undergoes transient dimerization following photoexcitation or upon temperature reduction, with a relaxation time of about 2 minutes. The dimer may be the inactive state. Interacts with the N- and C-terminal domains of BluR. Can also interact with the C-terminal domain of MlrA. Requires FAD as cofactor.

In terms of biological role, binds to and releases the BluR repressor from its bound DNA target in a blue light-dependent (470 nm) fashion. A shift to low temperature also triggers a BluF-mediated relief of repression by BluR, suggesting BluF may serve as a thermometer. Blue light may act to increase the affinity of BluF for BluR, allowing it to be released from its operator. The protein has a reversible photocycle, and undergoes structural changes, probably in the EAL domain, in response to light. The chain is Blue light- and temperature-regulated antirepressor BluF from Escherichia coli (strain K12).